A 109-amino-acid chain; its full sequence is U4-lycotoxin-Ls1a (109 aa).

A signal peptide spans 1–22 (MKVLVLFSVLFLTLFSYSSTEA). Positions 23–44 (IDEFDSDAEEDMLSLMANEQVR) are excised as a propeptide. Residues 45 to 88 (AKACTPRLHDCSHDRHSCCRGELFKDVCYCFYPEGEDKTEVCSC) form a knottin domain region. Cystine bridges form between cysteine 48–cysteine 63, cysteine 55–cysteine 72, cysteine 62–cysteine 88, and cysteine 74–cysteine 86. The tract at residues 89–108 (QQPKSHKYIEKVVDKAKTVV) is linear cationic cytotoxin domain.

The protein belongs to the neurotoxin 19 (CSTX) family. 05 (U4-Lctx) subfamily. Expressed by the venom gland.

The protein resides in the secreted. Its function is as follows. Enhances the high-affinity desensitization of human P2RX3 purinoceptors. This is U4-lycotoxin-Ls1a from Lycosa singoriensis (Wolf spider).